The chain runs to 104 residues: Large ribosomal subunit protein uL23 (104 aa).

This sequence belongs to the universal ribosomal protein uL23 family. As to quaternary structure, part of the 50S ribosomal subunit. Contacts protein L29, and trigger factor when it is bound to the ribosome.

In terms of biological role, one of the early assembly proteins it binds 23S rRNA. One of the proteins that surrounds the polypeptide exit tunnel on the outside of the ribosome. Forms the main docking site for trigger factor binding to the ribosome. The sequence is that of Large ribosomal subunit protein uL23 from Ralstonia pickettii (strain 12J).